Here is a 92-residue protein sequence, read N- to C-terminus: ATP synthase subunit c (92 aa).

A run of 2 helical transmembrane segments spans residues 20–40 (GAGL…GTGL) and 71–91 (MAIS…LVFV).

Belongs to the ATPase C chain family. As to quaternary structure, F-type ATPases have 2 components, F(1) - the catalytic core - and F(0) - the membrane proton channel. F(1) has five subunits: alpha(3), beta(3), gamma(1), delta(1), epsilon(1). F(0) has three main subunits: a(1), b(2) and c(10-14). The alpha and beta chains form an alternating ring which encloses part of the gamma chain. F(1) is attached to F(0) by a central stalk formed by the gamma and epsilon chains, while a peripheral stalk is formed by the delta and b chains.

The protein resides in the cell membrane. F(1)F(0) ATP synthase produces ATP from ADP in the presence of a proton or sodium gradient. F-type ATPases consist of two structural domains, F(1) containing the extramembraneous catalytic core and F(0) containing the membrane proton channel, linked together by a central stalk and a peripheral stalk. During catalysis, ATP synthesis in the catalytic domain of F(1) is coupled via a rotary mechanism of the central stalk subunits to proton translocation. Its function is as follows. Key component of the F(0) channel; it plays a direct role in translocation across the membrane. A homomeric c-ring of between 10-14 subunits forms the central stalk rotor element with the F(1) delta and epsilon subunits. This chain is ATP synthase subunit c, found in Mycoplasmopsis pulmonis (strain UAB CTIP) (Mycoplasma pulmonis).